We begin with the raw amino-acid sequence, 142 residues long: uncharacterized protein (142 aa).

The N-acetyltransferase domain occupies 2–142 (IHMKQLTSKE…IESYLFRKPV (141 aa)).

Belongs to the acetyltransferase family.

This is an uncharacterized protein from Bacillus subtilis (strain 168).